Reading from the N-terminus, the 228-residue chain is Large ribosomal subunit protein uL4 (228 aa).

2 disordered regions span residues 45–102 (GRQG…SQRT) and 208–228 (PAKG…EANQ). Positions 208 to 221 (PAKGKTAKAAATSG) are enriched in low complexity.

This sequence belongs to the universal ribosomal protein uL4 family. In terms of assembly, part of the 50S ribosomal subunit.

Functionally, one of the primary rRNA binding proteins, this protein initially binds near the 5'-end of the 23S rRNA. It is important during the early stages of 50S assembly. It makes multiple contacts with different domains of the 23S rRNA in the assembled 50S subunit and ribosome. Its function is as follows. Forms part of the polypeptide exit tunnel. This is Large ribosomal subunit protein uL4 from Saccharopolyspora erythraea (strain ATCC 11635 / DSM 40517 / JCM 4748 / NBRC 13426 / NCIMB 8594 / NRRL 2338).